We begin with the raw amino-acid sequence, 367 residues long: tRNA-specific 2-thiouridylase MnmA (367 aa).

Residues 13-20 (GLSGGVDS) and Met39 each bind ATP. Positions 99-101 (NPD) are interaction with target base in tRNA. Cys104 serves as the catalytic Nucleophile. Residues Cys104 and Cys200 are joined by a disulfide bond. Position 128 (Gly128) interacts with ATP. Positions 150 to 152 (KDQ) are interaction with tRNA. Residue Cys200 is the Cysteine persulfide intermediate of the active site. Residues 307 to 308 (RY) form an interaction with tRNA region.

Belongs to the MnmA/TRMU family.

It is found in the cytoplasm. It catalyses the reaction S-sulfanyl-L-cysteinyl-[protein] + uridine(34) in tRNA + AH2 + ATP = 2-thiouridine(34) in tRNA + L-cysteinyl-[protein] + A + AMP + diphosphate + H(+). In terms of biological role, catalyzes the 2-thiolation of uridine at the wobble position (U34) of tRNA, leading to the formation of s(2)U34. This chain is tRNA-specific 2-thiouridylase MnmA, found in Neisseria meningitidis serogroup C (strain 053442).